We begin with the raw amino-acid sequence, 274 residues long: Formamidopyrimidine-DNA glycosylase (274 aa).

P2 (schiff-base intermediate with DNA) is an active-site residue. The active-site Proton donor is the E3. The active-site Proton donor; for beta-elimination activity is the K58. The DNA site is built by H91, R110, and K152. The FPG-type zinc-finger motif lies at 237-271 (KVYGRKNLPCLVCENKIETVVIAGRHSAFCPHCQP). R261 serves as the catalytic Proton donor; for delta-elimination activity.

The protein belongs to the FPG family. In terms of assembly, monomer. It depends on Zn(2+) as a cofactor.

It catalyses the reaction Hydrolysis of DNA containing ring-opened 7-methylguanine residues, releasing 2,6-diamino-4-hydroxy-5-(N-methyl)formamidopyrimidine.. The catalysed reaction is 2'-deoxyribonucleotide-(2'-deoxyribose 5'-phosphate)-2'-deoxyribonucleotide-DNA = a 3'-end 2'-deoxyribonucleotide-(2,3-dehydro-2,3-deoxyribose 5'-phosphate)-DNA + a 5'-end 5'-phospho-2'-deoxyribonucleoside-DNA + H(+). Its function is as follows. Involved in base excision repair of DNA damaged by oxidation or by mutagenic agents. Acts as a DNA glycosylase that recognizes and removes damaged bases. Has a preference for oxidized purines, such as 7,8-dihydro-8-oxoguanine (8-oxoG). Has AP (apurinic/apyrimidinic) lyase activity and introduces nicks in the DNA strand. Cleaves the DNA backbone by beta-delta elimination to generate a single-strand break at the site of the removed base with both 3'- and 5'-phosphates. This Legionella pneumophila (strain Paris) protein is Formamidopyrimidine-DNA glycosylase.